Reading from the N-terminus, the 208-residue chain is MVSKRVESLLNQLRTQGIVDERVLEAIALVPREKFVDEAFEHKAWENTALPIGQGQTISQPYMVARMTELLTLTPESRVLEIGTGSGYQTAILAHLVHHVCSVERIKSLQWQARRRLKQLDLHNVSTRHGDGWQGWQARAPFDAIIVTAAPPEIPTALLAQLDDDGVLVLPVGEEHQFLKRIRRRGNEFIIDTVEAVRFVPLVKGELA.

Ser-59 is a catalytic residue.

The protein belongs to the methyltransferase superfamily. L-isoaspartyl/D-aspartyl protein methyltransferase family.

The protein localises to the cytoplasm. The catalysed reaction is [protein]-L-isoaspartate + S-adenosyl-L-methionine = [protein]-L-isoaspartate alpha-methyl ester + S-adenosyl-L-homocysteine. In terms of biological role, catalyzes the methyl esterification of L-isoaspartyl residues in peptides and proteins that result from spontaneous decomposition of normal L-aspartyl and L-asparaginyl residues. It plays a role in the repair and/or degradation of damaged proteins. This is Protein-L-isoaspartate O-methyltransferase from Klebsiella pneumoniae subsp. pneumoniae (strain ATCC 700721 / MGH 78578).